Here is a 281-residue protein sequence, read N- to C-terminus: AB hydrolase superfamily protein YclE (281 aa).

In terms of domain architecture, AB hydrolase-1 spans 30–268 (SAVYYPRLFS…SGHQPMLEEP (239 aa)). The active-site Nucleophile is the S95. Residue D232 is part of the active site. Catalysis depends on H261, which acts as the Proton donor.

The protein belongs to the AB hydrolase superfamily.

The chain is AB hydrolase superfamily protein YclE (yclE) from Bacillus subtilis (strain 168).